A 441-amino-acid polypeptide reads, in one-letter code: DNA-binding protein (441 aa).

Residues 1 to 18 show a composition bias toward basic residues; it reads MERTPKRAHGFRSTKPVK. The disordered stretch occupies residues 1–85; the sequence is MERTPKRAHG…EESPEAPLSD (85 aa). 2 stretches are compositionally biased toward acidic residues: residues 24–33 and 67–79; these read MMEEEEEEVE and VDDE…EESP. Residues Cys-191 and His-193 each coordinate Zn(2+). A flexible loop region spans residues 204 to 236; that stretch reads VELNPSSEAGKRALAEQNGVIEKNRFGRQVVVL. The Zn(2+) site is built by Cys-244, Cys-262, Cys-305, Cys-307, Cys-359, and Cys-380. The tract at residues 426-441 is C-terminal arm, DBP binding; sequence EVLAPVSPIASDDPFA.

Belongs to the adenoviridae E2A DNA-binding protein family. Homomultimerizes on viral ssDNA bound to pTP. Forms a initiation complex with viral polymerase, pTP and hosts NFIA and POU2F1/OCT1. Interacts with host SRCAP.

The protein localises to the host nucleus. In terms of biological role, plays a role in the elongation phase of viral strand displacement replication by unwinding the template in an ATP-independent fashion, employing its capacity to form multimers. Also enhances the rate of initiation. Released from template upon second strand synthesis. Assembles in complex with viral pTP, viral pol, host NFIA and host POU2F1/OCT1 on viral origin of replication. Covers the whole ssDNA genome during synthesis. The complementary strand synthesis induces its relese from DNA template. May inhibit cellular transcription mediated by the interaction between host SRCAP and CBP. The sequence is that of DNA-binding protein from Fowl adenovirus A serotype 1 (strain CELO / Phelps) (FAdV-1).